A 115-amino-acid polypeptide reads, in one-letter code: Parathyroid hormone (115 aa).

A signal peptide spans 1-25 (MMSAKNMVKVMIVMFAIFLLAKSDG). A propeptide spanning residues 26–31 (KPVRKR) is cleaved from the precursor. The tract at residues 51–69 (RVEWLRKKLQDVHNFIALG) is important for receptor binding. Residues 73–115 (FHRDGGSQRPRKKEDNVLIESHQKSLGEADKADVDVLSKTKSQ) form a disordered region.

It belongs to the parathyroid hormone family. In terms of assembly, interacts with PTH1R (via N-terminal extracellular domain).

The protein resides in the secreted. In terms of biological role, parathyroid hormone elevates calcium level by dissolving the salts in bone and preventing their renal excretion. Acts by binding to its receptor, PTH1R, activating G protein-coupled receptor signaling. Stimulates [1-14C]-2-deoxy-D-glucose (2DG) transport and glycogen synthesis in osteoblastic cells. This Equus caballus (Horse) protein is Parathyroid hormone (PTH).